The sequence spans 376 residues: PqqA peptide cyclase (376 aa).

A Radical SAM core domain is found at 4–219 (VPPPLSVLLE…VETARRSLGD (216 aa)). Positions 18, 22, and 25 each coordinate [4Fe-4S] cluster.

The protein belongs to the radical SAM superfamily. PqqE family. Interacts with PqqD. The interaction is necessary for activity of PqqE. It depends on [4Fe-4S] cluster as a cofactor.

It carries out the reaction [PQQ precursor protein] + S-adenosyl-L-methionine = E-Y cross-linked-[PQQ precursor protein] + 5'-deoxyadenosine + L-methionine + H(+). Its pathway is cofactor biosynthesis; pyrroloquinoline quinone biosynthesis. Catalyzes the cross-linking of a glutamate residue and a tyrosine residue in the PqqA protein as part of the biosynthesis of pyrroloquinoline quinone (PQQ). The polypeptide is PqqA peptide cyclase (Xanthomonas campestris pv. campestris (strain B100)).